Reading from the N-terminus, the 251-residue chain is 5-oxoprolinase subunit A (251 aa).

This sequence belongs to the LamB/PxpA family. Forms a complex composed of PxpA, PxpB and PxpC.

The catalysed reaction is 5-oxo-L-proline + ATP + 2 H2O = L-glutamate + ADP + phosphate + H(+). Functionally, catalyzes the cleavage of 5-oxoproline to form L-glutamate coupled to the hydrolysis of ATP to ADP and inorganic phosphate. This chain is 5-oxoprolinase subunit A, found in Vibrio parahaemolyticus serotype O3:K6 (strain RIMD 2210633).